The sequence spans 490 residues: DNA-binding protein D-ETS-3 (490 aa).

2 disordered regions span residues 190 to 255 and 271 to 294; these read TASS…SGGG and SSTQ…SQLR. Positions 196–207 are enriched in basic and acidic residues; that stretch reads HVEHKVRADKST. Positions 211–227 are enriched in low complexity; the sequence is ATTSSHAAAPSSSSSAS. Residues 244–255 show a composition bias toward gly residues; the sequence is GTGGGASASGGG. A compositionally biased stretch (low complexity) spans 271 to 280; sequence SSTQSQGYSS. A DNA-binding region (ETS) is located at residues 317 to 397; that stretch reads IQLWQFLLEL…HGKRYAYKFD (81 aa).

Belongs to the ETS family. In terms of tissue distribution, embryonic ventral nervous system, higher in the thoracic than abdominal segments.

The protein resides in the nucleus. The chain is DNA-binding protein D-ETS-3 (Ets65A) from Drosophila melanogaster (Fruit fly).